The primary structure comprises 415 residues: Glutamyl-tRNA reductase (415 aa).

Residues 49–52, serine 104, 109–111, and glutamine 115 each bind substrate; these read TCNR and EPQ. The active-site Nucleophile is cysteine 50. Residue 184–189 coordinates NADP(+); that stretch reads GAGEMI.

The protein belongs to the glutamyl-tRNA reductase family. In terms of assembly, homodimer.

The enzyme catalyses (S)-4-amino-5-oxopentanoate + tRNA(Glu) + NADP(+) = L-glutamyl-tRNA(Glu) + NADPH + H(+). It functions in the pathway porphyrin-containing compound metabolism; protoporphyrin-IX biosynthesis; 5-aminolevulinate from L-glutamyl-tRNA(Glu): step 1/2. In terms of biological role, catalyzes the NADPH-dependent reduction of glutamyl-tRNA(Glu) to glutamate 1-semialdehyde (GSA). The chain is Glutamyl-tRNA reductase from Neisseria meningitidis serogroup C / serotype 2a (strain ATCC 700532 / DSM 15464 / FAM18).